We begin with the raw amino-acid sequence, 281 residues long: Transmembrane protein 41A-A (281 aa).

The signal sequence occupies residues 1–22; it reads MRSLVGLVAVIVTATFYLYSLS. The segment at 32–56 is disordered; sequence HKQSHEGETTDAKDGDEPSEMETAS. Positions 34 to 47 are enriched in basic and acidic residues; the sequence is QSHEGETTDAKDGD. 5 consecutive transmembrane segments (helical) span residues 84–104, 107–127, 170–190, 197–217, and 236–256; these read GYVL…AIPG, FLNI…LTCV, LFFF…FLNM, IPVT…NFIC, and WSVV…GALI.

This sequence belongs to the TMEM41 family.

It localises to the membrane. The sequence is that of Transmembrane protein 41A-A (tmem41aa) from Danio rerio (Zebrafish).